A 569-amino-acid polypeptide reads, in one-letter code: Acetate/butyrate--CoA ligase AAE7, peroxisomal (569 aa).

A Microbody targeting signal motif is present at residues 567 to 569; the sequence is SRL.

It belongs to the ATP-dependent AMP-binding enzyme family. As to expression, expressed in roots, leaves, stems, flowers and developing seeds.

It is found in the peroxisome. It catalyses the reaction acetate + ATP + CoA = acetyl-CoA + AMP + diphosphate. The enzyme catalyses a medium-chain fatty acid + ATP + CoA = a medium-chain fatty acyl-CoA + AMP + diphosphate. Functionally, peroxisomal acetate/butyrate--CoA ligase that is probably involved in the activation of exogenous acetate for entry into the glyoxylate cycle. May play a role to prevent carbon loss from peroxisomes during lipid mobilization. In vitro, is active with both acetate and butyrate. This Arabidopsis thaliana (Mouse-ear cress) protein is Acetate/butyrate--CoA ligase AAE7, peroxisomal (AAE7).